A 612-amino-acid chain; its full sequence is Arginine--tRNA ligase (612 aa).

A 'HIGH' region motif is present at residues 152 to 162 (PNIAKEMHVGH).

The protein belongs to the class-I aminoacyl-tRNA synthetase family. Monomer.

The protein localises to the cytoplasm. It carries out the reaction tRNA(Arg) + L-arginine + ATP = L-arginyl-tRNA(Arg) + AMP + diphosphate. The polypeptide is Arginine--tRNA ligase (Prochlorococcus marinus (strain MIT 9313)).